The following is a 451-amino-acid chain: MTYFFETYGCQMNQAESSSMEQILLEKGWTNSSDAEHCDLLIINTCSVRITAENRVLGRLGHFSGLKKKRKFFVLLIGCMAERLYTEIQKEFPLIDYVVGMFERNLLPQIFDEIKARLKNDNYMAEFTHDNIEEKPVSGYYFAPLSHSPKSFQSYVPIMNGCNNFCTYCIVPYVRGREVSRPVNEILQEITELSSRGVREITLLGQNVNSYKGEDGEGRLIDFPKLLTLIAREADKTDMIRWIRFMSSHPKDMSDALIDTIAAEKRLCKLVHLPVQHGSDTILKRMNRVYTIEHYKNRIKRLKETIPDIALSTDILMGFPGETEDDVKATLDLMQEIEFDSAFMYHYNPREGTKAFNYPDRIPEEVKIERLGRVIDLQLKITAKKMKAKLGKKVDILVESHSRNERSELFGHTEQGEMTVIQGNPPESLIGNFAHAELKELKGKTFRANLN.

An MTTase N-terminal domain is found at 1-116; the sequence is MTYFFETYGC…LPQIFDEIKA (116 aa). Residues Cys-10, Cys-46, Cys-79, Cys-162, Cys-166, and Cys-169 each contribute to the [4Fe-4S] cluster site. In terms of domain architecture, Radical SAM core spans 148–384; it reads SPKSFQSYVP…IDLQLKITAK (237 aa). Residues 387-451 form the TRAM domain; the sequence is KAKLGKKVDI…KGKTFRANLN (65 aa).

This sequence belongs to the methylthiotransferase family. MiaB subfamily. As to quaternary structure, monomer. [4Fe-4S] cluster serves as cofactor.

Its subcellular location is the cytoplasm. The enzyme catalyses N(6)-dimethylallyladenosine(37) in tRNA + (sulfur carrier)-SH + AH2 + 2 S-adenosyl-L-methionine = 2-methylsulfanyl-N(6)-dimethylallyladenosine(37) in tRNA + (sulfur carrier)-H + 5'-deoxyadenosine + L-methionine + A + S-adenosyl-L-homocysteine + 2 H(+). In terms of biological role, catalyzes the methylthiolation of N6-(dimethylallyl)adenosine (i(6)A), leading to the formation of 2-methylthio-N6-(dimethylallyl)adenosine (ms(2)i(6)A) at position 37 in tRNAs that read codons beginning with uridine. The sequence is that of tRNA-2-methylthio-N(6)-dimethylallyladenosine synthase from Treponema denticola (strain ATCC 35405 / DSM 14222 / CIP 103919 / JCM 8153 / KCTC 15104).